The chain runs to 763 residues: Phosphoglycerol transferase I (763 aa).

Transmembrane regions (helical) follow at residues 1-21, 26-46, 77-97, and 108-128; these read MSELLSVALFLASVLIYAWKA, WWFAATLTVLGLFVILNITLY, ILPGIGIALALVAVFGALGWI, and VGYSLLALLLALGSVDASPAF.

The protein belongs to the OpgB family.

Its subcellular location is the cell inner membrane. The enzyme catalyses a phosphatidylglycerol + a membrane-derived-oligosaccharide D-glucose = a 1,2-diacyl-sn-glycerol + a membrane-derived-oligosaccharide 6-(glycerophospho)-D-glucose.. It participates in glycan metabolism; osmoregulated periplasmic glucan (OPG) biosynthesis. In terms of biological role, transfers a phosphoglycerol residue from phosphatidylglycerol to the membrane-bound nascent glucan backbones. The protein is Phosphoglycerol transferase I of Salmonella agona (strain SL483).